An 85-amino-acid chain; its full sequence is Insect toxin 2-53 (85 aa).

The signal sequence occupies residues 1-21; it reads MKLLLLLIVSASMLIESLVNA. The LCN-type CS-alpha/beta domain occupies 22–82; the sequence is DGYIKRRDGC…TWKSETNTCG (61 aa). Intrachain disulfides connect Cys-31–Cys-81, Cys-35–Cys-56, Cys-42–Cys-63, and Cys-46–Cys-65. Gly-82 is modified (glycine amide).

This sequence belongs to the long (4 C-C) scorpion toxin superfamily. Sodium channel inhibitor family. Beta subfamily. As to expression, expressed by the venom gland.

It is found in the secreted. Depressant insect toxins cause a transient contraction paralysis followed by a slow flaccid paralysis. They bind voltage-independently to sodium channels (Nav) and block action potentials, primarily by depolarizing the axonal membrane and suppressing the sodium current. The polypeptide is Insect toxin 2-53 (Leiurus hebraeus (Hebrew deathstalker scorpion)).